Here is a 458-residue protein sequence, read N- to C-terminus: Bifunctional protein GlmU (458 aa).

The tract at residues 1–229 (MNKFAIVLAA…FDESLGVNDR (229 aa)) is pyrophosphorylase. Residues 8–11 (LAAG), K22, Q72, and 77–78 (GT) each bind UDP-N-acetyl-alpha-D-glucosamine. D102 provides a ligand contact to Mg(2+). Residues G139, E154, N169, and N227 each coordinate UDP-N-acetyl-alpha-D-glucosamine. N227 provides a ligand contact to Mg(2+). The linker stretch occupies residues 230–250 (VALSQAELTMRKRINHQHMVN). Residues 251–458 (GVTLIDPATT…AKKMPHYRGQ (208 aa)) are N-acetyltransferase. R332 and K350 together coordinate UDP-N-acetyl-alpha-D-glucosamine. H362 (proton acceptor) is an active-site residue. UDP-N-acetyl-alpha-D-glucosamine-binding residues include Y365 and N376. Acetyl-CoA is bound by residues A379, S404, A422, and R439.

It in the N-terminal section; belongs to the N-acetylglucosamine-1-phosphate uridyltransferase family. In the C-terminal section; belongs to the transferase hexapeptide repeat family. Homotrimer. It depends on Mg(2+) as a cofactor.

Its subcellular location is the cytoplasm. The catalysed reaction is alpha-D-glucosamine 1-phosphate + acetyl-CoA = N-acetyl-alpha-D-glucosamine 1-phosphate + CoA + H(+). The enzyme catalyses N-acetyl-alpha-D-glucosamine 1-phosphate + UTP + H(+) = UDP-N-acetyl-alpha-D-glucosamine + diphosphate. The protein operates within nucleotide-sugar biosynthesis; UDP-N-acetyl-alpha-D-glucosamine biosynthesis; N-acetyl-alpha-D-glucosamine 1-phosphate from alpha-D-glucosamine 6-phosphate (route II): step 2/2. It functions in the pathway nucleotide-sugar biosynthesis; UDP-N-acetyl-alpha-D-glucosamine biosynthesis; UDP-N-acetyl-alpha-D-glucosamine from N-acetyl-alpha-D-glucosamine 1-phosphate: step 1/1. Its pathway is bacterial outer membrane biogenesis; LPS lipid A biosynthesis. Catalyzes the last two sequential reactions in the de novo biosynthetic pathway for UDP-N-acetylglucosamine (UDP-GlcNAc). The C-terminal domain catalyzes the transfer of acetyl group from acetyl coenzyme A to glucosamine-1-phosphate (GlcN-1-P) to produce N-acetylglucosamine-1-phosphate (GlcNAc-1-P), which is converted into UDP-GlcNAc by the transfer of uridine 5-monophosphate (from uridine 5-triphosphate), a reaction catalyzed by the N-terminal domain. The chain is Bifunctional protein GlmU from Lactococcus lactis subsp. lactis (strain IL1403) (Streptococcus lactis).